The following is a 188-amino-acid chain: Adenine phosphoribosyltransferase (188 aa).

Belongs to the purine/pyrimidine phosphoribosyltransferase family. As to quaternary structure, homodimer.

It is found in the cytoplasm. The catalysed reaction is AMP + diphosphate = 5-phospho-alpha-D-ribose 1-diphosphate + adenine. It functions in the pathway purine metabolism; AMP biosynthesis via salvage pathway; AMP from adenine: step 1/1. Catalyzes a salvage reaction resulting in the formation of AMP, that is energically less costly than de novo synthesis. The polypeptide is Adenine phosphoribosyltransferase (Neisseria meningitidis serogroup A / serotype 4A (strain DSM 15465 / Z2491)).